The sequence spans 1733 residues: Collagen alpha-1(XXIV) chain (1733 aa).

The N-terminal stretch at 1-35 (MHLGAYRTRHGKVSPTTETKLFLRFIVLCVVWISV) is a signal peptide. Residues 102–229 (ISLRQPLTVL…TVCQLEIMPS (128 aa)) enclose the Laminin G-like domain. Asn-157 is a glycosylation site (N-linked (GlcNAc...) asparagine). Positions 257-335 (PHTAGMPTRH…SQEHQTPRAQ (79 aa)) are disordered. Over residues 312–324 (IPNNRSNGSATVH) the composition is skewed to polar residues. N-linked (GlcNAc...) asparagine glycosylation is found at Asn-366, Asn-396, and Asn-448. The tract at residues 505-1499 (YLRGPKGDPG…GPPGAPGPRR (995 aa)) is disordered. 15 consecutive Collagen-like domains span residues 506-561 (LRGP…PGLS), 577-636 (GLVG…KGVR), 679-738 (GPAG…KGEQ), 742-801 (GEPG…PGQN), 802-861 (GPEG…KGEV), 886-945 (GSIG…KGQR), 946-1005 (GPRG…SGDV), 1006-1065 (GPAG…PGPR), 1072-1131 (GEEG…PGQR), 1135-1189 (GKKG…GIPG), 1191-1215 (RGHQ…PGED), 1220-1279 (GPPG…KGER), 1316-1375 (GVDG…KGEQ), 1376-1435 (GLPG…AGIV), and 1439-1498 (GPKG…PGPR). A compositionally biased stretch (pro residues) spans 512 to 524 (DPGPPGPPGPMGI). 2 stretches are compositionally biased toward low complexity: residues 573 to 599 (PGLL…LPGL) and 699 to 708 (PGVTGSVGPA). The span at 776–789 (DPGPQGPSGPPGPE) shows a compositional bias: pro residues. Residues 912–921 (PGPPGAPGPM) are compositionally biased toward pro residues. Low complexity predominate over residues 923–944 (PLGLPGLVGARGAPGSPGPKGQ). Positions 1045–1054 (GAKGDGGPAG) are enriched in gly residues. Over residues 1056-1074 (AGATGEPGPRGEPGAPGEE) the composition is skewed to low complexity. The segment covering 1084–1093 (GAPGGSGLPG) has biased composition (gly residues). The span at 1175–1205 (PLGLMGPEGEPGIPGYRGHQGQPGPSGLPGP) shows a compositional bias: low complexity. Residues 1237–1246 (TGEHGEEGYK) are compositionally biased toward basic and acidic residues. Over residues 1323 to 1339 (YPGKPGLPGKQGLLGVP) the composition is skewed to low complexity. A compositionally biased stretch (gly residues) spans 1352–1361 (GPQGGKGASG). Composition is skewed to low complexity over residues 1371-1386 (PKGE…VPGQ) and 1434-1444 (IVGIVGPKGPI). Pro residues predominate over residues 1485 to 1495 (QPGPPGPPGAP). The region spanning 1534-1733 (SDIFKTLTYL…YIESNSVCFL (200 aa)) is the Fibrillar collagen NC1 domain.

This sequence belongs to the fibrillar collagen family. In terms of tissue distribution, expressed in skeleton. Found at ossification centers of the craniofacial, axial and appendicular skeleton. Also expressed in retina and to a lower extent in cornea, skin and tendon.

The protein resides in the secreted. It is found in the extracellular space. It localises to the extracellular matrix. Involved in osteoblast differentiation. In Mus musculus (Mouse), this protein is Collagen alpha-1(XXIV) chain (Col24a1).